Reading from the N-terminus, the 393-residue chain is PGA synthase CapB (393 aa).

It depends on Mn(2+) as a cofactor.

Functionally, catalyzes the biosynthesis of PGA (gamma-polyglutamic acid) from L-glutamate. Both the 44-kDa and the 33-kDa forms are required for PGA synthesis. This is PGA synthase CapB (capB) from Bacillus subtilis (strain 168).